Consider the following 89-residue polypeptide: Small ribosomal subunit protein uS15 (89 aa).

This sequence belongs to the universal ribosomal protein uS15 family. Part of the 30S ribosomal subunit. Forms a bridge to the 50S subunit in the 70S ribosome, contacting the 23S rRNA.

One of the primary rRNA binding proteins, it binds directly to 16S rRNA where it helps nucleate assembly of the platform of the 30S subunit by binding and bridging several RNA helices of the 16S rRNA. Functionally, forms an intersubunit bridge (bridge B4) with the 23S rRNA of the 50S subunit in the ribosome. The protein is Small ribosomal subunit protein uS15 of Treponema denticola (strain ATCC 35405 / DSM 14222 / CIP 103919 / JCM 8153 / KCTC 15104).